Here is a 1017-residue protein sequence, read N- to C-terminus: Probable calcium-transporting ATPase 8, plasma membrane-type (1017 aa).

At 1–153 (MEKLDRYLQE…FVWDAFQDMT (153 aa)) the chain is on the cytoplasmic side. Transmembrane regions (helical) follow at residues 154–174 (LIILMVCALLSVAVGLATEGW) and 177–197 (GMYDGLGIILSIFLVVMVTAV). Residues 198-228 (SDYKQSLQFKELDNEKKKIFIHVTRDGRRQK) are Cytoplasmic-facing. 2 helical membrane-spanning segments follow: residues 229–249 (ISIYDLVVGDIVHLSIGDQVP) and 331–351 (VATVIGKIGLVFAILTFLVLL). The Cytoplasmic portion of the chain corresponds to 352-384 (VRFLIDKGMTVGLLKWYSTDALTIVNYFATAVT). A helical transmembrane segment spans residues 385–405 (IIVVAVPEGLPLAVTLSLAFA). The active-site 4-aspartylphosphate intermediate is the Asp-434. Positions 736 and 740 each coordinate Mg(2+). The chain crosses the membrane as a helical span at residues 803-823 (IVALVINFVSACITGSAPLTA). Topologically, residues 824-825 (VQ) are cytoplasmic. The next 2 membrane-spanning stretches (helical) occupy residues 826 to 846 (LLWVNMIMDTLGALALATEPP) and 875 to 895 (SLYQLFVLGALMFGGESLLNI). Residues 896-938 (KGADSKSIINTLIFNSFVFCQVFNEINSREMQKINVFRGIISN) lie on the Cytoplasmic side of the membrane. A run of 2 helical transmembrane segments spans residues 939 to 959 (WIFIAVIAATVAFQVVIIEFL) and 973 to 993 (WLLSVGLGSISLIVGVILKCI). Over 994–1017 (PVGSGETSATPNGYRPLANGPDDI) the chain is Cytoplasmic.

It belongs to the cation transport ATPase (P-type) (TC 3.A.3) family. Type IIB subfamily.

It is found in the membrane. It carries out the reaction Ca(2+)(in) + ATP + H2O = Ca(2+)(out) + ADP + phosphate + H(+). With respect to regulation, activated by calmodulin. Functionally, this magnesium-dependent enzyme catalyzes the hydrolysis of ATP coupled with the translocation of calcium from the cytosol out of the cell, into the endoplasmic reticulum, or into organelles. The chain is Probable calcium-transporting ATPase 8, plasma membrane-type from Oryza sativa subsp. japonica (Rice).